The following is a 467-amino-acid chain: NADH-quinone oxidoreductase subunit H (467 aa).

The next 9 helical transmembrane spans lie at 18 to 38, 88 to 108, 131 to 151, 172 to 192, 206 to 226, 256 to 276, 296 to 316, 328 to 348, and 363 to 383; these read WWLV…TVLF, AVYV…IAVI, LPIA…GIVL, MISY…YSGS, WYIV…VGET, FMLA…TLFL, WWPL…FIWL, LMKL…MLVA, and IALY…LVDM. The interval 389-467 is disordered; that stretch reads GKAADQPAET…PTDGKEASDG (79 aa). Positions 418–430 are enriched in pro residues; sequence PVPPMPGQQVPPV.

Belongs to the complex I subunit 1 family. NDH-1 is composed of 14 different subunits. Subunits NuoA, H, J, K, L, M, N constitute the membrane sector of the complex.

It localises to the cell membrane. It catalyses the reaction a quinone + NADH + 5 H(+)(in) = a quinol + NAD(+) + 4 H(+)(out). In terms of biological role, NDH-1 shuttles electrons from NADH, via FMN and iron-sulfur (Fe-S) centers, to quinones in the respiratory chain. The immediate electron acceptor for the enzyme in this species is believed to be ubiquinone. Couples the redox reaction to proton translocation (for every two electrons transferred, four hydrogen ions are translocated across the cytoplasmic membrane), and thus conserves the redox energy in a proton gradient. This subunit may bind ubiquinone. This chain is NADH-quinone oxidoreductase subunit H, found in Streptomyces coelicolor (strain ATCC BAA-471 / A3(2) / M145).